The primary structure comprises 66 residues: Large ribosomal subunit protein bL35 (66 aa).

The disordered stretch occupies residues 1–42 (MPKQKTHRASAKRFKRTANGGLKRHHAYTGHRFHGKTKKQRR).

The protein belongs to the bacterial ribosomal protein bL35 family.

The chain is Large ribosomal subunit protein bL35 from Lactobacillus gasseri (strain ATCC 33323 / DSM 20243 / BCRC 14619 / CIP 102991 / JCM 1131 / KCTC 3163 / NCIMB 11718 / NCTC 13722 / AM63).